The sequence spans 479 residues: Lincomycin resistance protein LmrB (479 aa).

A run of 14 helical transmembrane segments spans residues Met19–Thr41, Trp56–Trp78, Phe85–Phe107, Arg112–Phe134, Ala141–Phe160, Trp170–Met192, Val205–Phe222, Trp232–Phe251, Met272–Leu294, Leu304–Val326, Trp338–Ser355, Thr360–Met382, Ile403–Ala425, and Ala449–Phe471.

Belongs to the major facilitator superfamily. EmrB family.

It localises to the cell membrane. Proton-dependent transporter. May mediate the efflux of lincomycin. This chain is Lincomycin resistance protein LmrB (lmrB), found in Bacillus subtilis (strain 168).